The sequence spans 194 residues: MGVIATPPPSVQGPSSQVPSSAPIPPGPVQDAYLQAVQQEMQDKGYLVARFDALMDWARTGSLWPMTFGLACCAVEMIHAYMARYDLDRFGVIPRPSPRQSDVMIVAGTVCNKMAPALRKVYDQMAEPRWVISMGSCANGGGYYHYSYSVVRGVDRIVPVDIYVPGCPPTAEALVYGVLQLQKKIKNGNRLIRT.

Residues 1–11 are compositionally biased toward pro residues; the sequence is MGVIATPPPSV. Residues 1–24 are disordered; sequence MGVIATPPPSVQGPSSQVPSSAPI. Residues 12–21 are compositionally biased toward low complexity; that stretch reads QGPSSQVPSS. Residues Cys72, Cys73, Cys137, and Cys167 each contribute to the [4Fe-4S] cluster site.

This sequence belongs to the complex I 20 kDa subunit family. In terms of assembly, NDH-1 is composed of 14 different subunits. Subunits NuoB, C, D, E, F, and G constitute the peripheral sector of the complex. The cofactor is [4Fe-4S] cluster.

Its subcellular location is the cell inner membrane. The catalysed reaction is a quinone + NADH + 5 H(+)(in) = a quinol + NAD(+) + 4 H(+)(out). In terms of biological role, NDH-1 shuttles electrons from NADH, via FMN and iron-sulfur (Fe-S) centers, to quinones in the respiratory chain. The immediate electron acceptor for the enzyme in this species is believed to be ubiquinone. Couples the redox reaction to proton translocation (for every two electrons transferred, four hydrogen ions are translocated across the cytoplasmic membrane), and thus conserves the redox energy in a proton gradient. The polypeptide is NADH-quinone oxidoreductase subunit B (Rhodospirillum centenum (strain ATCC 51521 / SW)).